The sequence spans 102 residues: Protein RnfH (102 aa).

It belongs to the UPF0125 (RnfH) family.

In Pseudomonas entomophila (strain L48), this protein is Protein RnfH.